Here is a 304-residue protein sequence, read N- to C-terminus: UTP--glucose-1-phosphate uridylyltransferase 1 (304 aa).

The protein belongs to the UDPGP type 2 family.

The enzyme catalyses alpha-D-glucose 1-phosphate + UTP + H(+) = UDP-alpha-D-glucose + diphosphate. It functions in the pathway carbohydrate metabolism; nucleotide-sugar metabolism. This is UTP--glucose-1-phosphate uridylyltransferase 1 (hasC1) from Streptococcus pyogenes serotype M18 (strain MGAS8232).